The primary structure comprises 200 residues: Small ribosomal subunit protein uS4 (200 aa).

A disordered region spans residues Thr-22 to Lys-42. Residues Ser-92–Lys-152 form the S4 RNA-binding domain.

It belongs to the universal ribosomal protein uS4 family. As to quaternary structure, part of the 30S ribosomal subunit. Contacts protein S5. The interaction surface between S4 and S5 is involved in control of translational fidelity.

One of the primary rRNA binding proteins, it binds directly to 16S rRNA where it nucleates assembly of the body of the 30S subunit. Functionally, with S5 and S12 plays an important role in translational accuracy. The protein is Small ribosomal subunit protein uS4 of Bacillus licheniformis (strain ATCC 14580 / DSM 13 / JCM 2505 / CCUG 7422 / NBRC 12200 / NCIMB 9375 / NCTC 10341 / NRRL NRS-1264 / Gibson 46).